Consider the following 201-residue polypeptide: Protease (201 aa).

Catalysis depends on residues His53, Asp70, and Cys121.

This sequence belongs to the peptidase C5 family. As to quaternary structure, interacts with protease cofactor pVI-C; this interaction is necessary for protease activation.

It localises to the virion. The protein localises to the host nucleus. The enzyme catalyses Cleaves proteins of the adenovirus and its host cell at two consensus sites: -Yaa-Xaa-Gly-Gly-|-Xaa- and -Yaa-Xaa-Gly-Xaa-|-Gly- (in which Yaa is Met, Ile or Leu, and Xaa is any amino acid).. With respect to regulation, requires DNA and protease cofactor for maximal activation. Inside nascent virions, becomes partially activated by binding to the viral DNA, allowing it to cleave the cofactor that binds to the protease and fully activates it. Actin, like the viral protease cofactor, seems to act as a cofactor in the cleavage of cytokeratin 18 and of actin itself. Functionally, cleaves viral precursor proteins (pTP, pIIIa, pVI, pVII, pVIII, and pX) inside newly assembled particles giving rise to mature virions. Protease complexed to its cofactor slides along the viral DNA to specifically locate and cleave the viral precursors. Mature virions have a weakened organization compared to the unmature virions, thereby facilitating subsequent uncoating. Without maturation, the particle lacks infectivity and is unable to uncoat. Late in adenovirus infection, in the cytoplasm, may participate in the cytoskeleton destruction. Cleaves host cell cytoskeletal keratins K7 and K18. This is Protease from Equine adenovirus B serotype 2 (EAdV-2).